A 508-amino-acid chain; its full sequence is Phenylalanine--tRNA ligase alpha subunit (508 aa).

An N-acetylalanine modification is found at A2. T190 carries the post-translational modification Phosphothreonine. S193 and S301 each carry phosphoserine. Residue K311 is modified to N6-acetyllysine. Residues T329, Q372 to E374, and Y412 contribute to the L-phenylalanine site. Mg(2+) is bound at residue E414. F438 lines the L-phenylalanine pocket.

This sequence belongs to the class-II aminoacyl-tRNA synthetase family. Phe-tRNA synthetase alpha subunit type 2 subfamily. In terms of assembly, heterotetramer; dimer of two heterodimers formed by FARSA and FARSB. Mg(2+) is required as a cofactor.

The protein resides in the cytoplasm. It carries out the reaction tRNA(Phe) + L-phenylalanine + ATP = L-phenylalanyl-tRNA(Phe) + AMP + diphosphate + H(+). In Pongo abelii (Sumatran orangutan), this protein is Phenylalanine--tRNA ligase alpha subunit (FARSA).